Reading from the N-terminus, the 155-residue chain is Protein U1 (155 aa).

It belongs to the nanovirus U1 protein family.

The sequence is that of Protein U1 (DNA-U1) from Cicer arietinum (Chickpea).